Here is a 68-residue protein sequence, read N- to C-terminus: Tabimmunregulin 1 (68 aa).

The first 26 residues, Met-1–Ala-26, serve as a signal peptide directing secretion. Positions Gln-27–Lys-38 are excised as a propeptide.

Expressed in salivary glands.

It localises to the secreted. Horsefly salivary gland immunosuppressant protein that likely inhibits the host inflammatory response by regulation of anti- and pro-inflammatory cytokines. When tested on mouse splenocytes in the presence of LPS, it increases the secretion of the proinflammatory cytokine interleukin-10 (IL10) and decreases the secretion of the proinflammatory cytokine interferon-gamma (IFNG) in a dose-dependent manner. The protein is Tabimmunregulin 1 of Tabanus yao (Horsefly).